Reading from the N-terminus, the 357-residue chain is U5 small nuclear ribonucleoprotein 40 kDa protein (357 aa).

Lys18 is covalently cross-linked (Glycyl lysine isopeptide (Lys-Gly) (interchain with G-Cter in SUMO2)). Arg21 carries the post-translational modification Asymmetric dimethylarginine. 7 WD repeats span residues 64–103 (GHEG…GNYA), 107–146 (GYSG…RVKR), 149–189 (GHTS…AIQT), 191–230 (QNTY…LTYT), 233–272 (GHAD…PKER), 283–322 (NFEK…ILYK), and 325–357 (GHAG…GEIQ). A Glycyl lysine isopeptide (Lys-Gly) (interchain with G-Cter in SUMO2) cross-link involves residue Lys270.

In terms of assembly, component of the pre-catalytic and catalytic spliceosome complexes. Component of the postcatalytic spliceosome P complex. Part of the U5 snRNP complex. Interacts with PRPF8. Component of the U4/U6-U5 tri-snRNP complex composed of the U4, U6 and U5 snRNAs and at least PRPF3, PRPF4, PRPF6, PRPF8, PRPF31, SNRNP200, TXNL4A, WDR57, SNRNP40, DDX23, CD2BP2, PPIH, SNU13, EFTUD2, SART1 and USP39. Component of the minor spliceosome, which splices U12-type introns.

Its subcellular location is the nucleus. In terms of biological role, required for pre-mRNA splicing as component of the activated spliceosome. Component of the U5 small nuclear ribonucleoprotein (snRNP) complex and the U4/U6-U5 tri-snRNP complex, building blocks of the spliceosome. As a component of the minor spliceosome, involved in the splicing of U12-type introns in pre-mRNAs. The chain is U5 small nuclear ribonucleoprotein 40 kDa protein (SNRNP40) from Pongo abelii (Sumatran orangutan).